The following is a 130-amino-acid chain: Protein lgg-2 (130 aa).

Glycine 130 is lipidated: Phosphatidylethanolamine amidated glycine.

This sequence belongs to the ATG8 family. May interact with vps-39. Interacts with lgg-3; the interaction is direct. Interacts with atg-16.1 (via WD domain) and atg-16.2 (via WD 5-6 repeats); the interactions are direct. Interacts with sepa-1 (via the LIR motifs); the interaction is direct. Interacts with sqst-1 (via the LIR motifs); the interaction is direct. Interacts with epg-2 (via the LIR motifs); the interaction is weak. Interacts with atg-7; the interaction is direct. Interacts with atg-3. The interaction with atg-7 and atg-3 may be required for the lipidation of lgg-2. This protein is subject to lipidation. Lipidation is regulated by lgg-1.

The protein localises to the cytoplasmic vesicle. The protein resides in the autophagosome. Its subcellular location is the cytoplasm. It is found in the cell membrane. Ubiquitin-like modifier involved in the formation of autophagosomal vacuoles (autophagosomes). When lipidated mediates tethering between adjacent membranes and stimulates membrane fusion. Less effective at promoting membrane fusion than lgg-1. Acts upstream of the autophagy protein epg-5 in the aggrephagy pathway, which is the macroautophagic degradation of ubiquitinated protein aggregates, and preferentially interacts with autophagy proteins and substrates containing LIR motifs to mediate autophagosome formation and protein aggregate degradation. In particular binds to components of an atg-5-lgg-3-atg-16 complex to regulate autophagosome formation and cargo sequestration. Required for the degradation of specific sqst-1-containing aggregates during embryogenesis and the early stages of larval development. Involved in allophagy, which is an autophagic process in which paternal mitochondria and organelles are degraded during fertilization, and moreover is required for the degradation of lgg-1-positive allophagic autophagosomes in embryos. Involved in xenophagy, the autophagy-mediated degradation of pathogens and pathogen products, such as toxins. Also plays a role in membrane-pore repair. Through HOPS complex subunit vps-39, tethers lysosomes with autophagosomes to form autolysosomes. Plays a role in the distribution and clearance of germ cell specific P-granules from somatic cells to ensure exclusive localization of the P-granules in germ cells. Essential for dauer development and life-span extension. The polypeptide is Protein lgg-2 (Caenorhabditis elegans).